Here is a 252-residue protein sequence, read N- to C-terminus: Trans-aconitate 2-methyltransferase (252 aa).

It belongs to the methyltransferase superfamily. Tam family.

It is found in the cytoplasm. The catalysed reaction is trans-aconitate + S-adenosyl-L-methionine = (E)-3-(methoxycarbonyl)pent-2-enedioate + S-adenosyl-L-homocysteine. Its function is as follows. Catalyzes the S-adenosylmethionine monomethyl esterification of trans-aconitate. In Escherichia coli (strain SE11), this protein is Trans-aconitate 2-methyltransferase.